We begin with the raw amino-acid sequence, 37 residues long: Large ribosomal subunit protein bL36c (37 aa).

It belongs to the bacterial ribosomal protein bL36 family.

Its subcellular location is the plastid. In Euglena longa (Euglenophycean alga), this protein is Large ribosomal subunit protein bL36c (rpl36).